The following is a 347-amino-acid chain: Guanine nucleotide-binding protein subunit beta (347 aa).

7 WD repeats span residues Gly60–Asp90, Leu102–Asn132, Ser148–Asp177, Asp189–Asp219, Gly231–Asp261, Asn275–Asp305, and Gly317–Ala347.

The protein belongs to the WD repeat G protein beta family. As to quaternary structure, g proteins are composed of 3 units, alpha, beta and gamma. Interacts with gpgA, and this requires phlp1.

The protein localises to the cytoplasm. It is found in the cell membrane. Its function is as follows. Guanine nucleotide-binding proteins (G proteins) are involved as a modulator or transducer in various transmembrane signaling systems. The beta and gamma chains are required for the GTPase activity, for replacement of GDP by GTP, and for G protein-effector interaction. Required for normal chemotaxis in response to cAMP and for aggregation during scorocarp development. The protein is Guanine nucleotide-binding protein subunit beta (gpbA) of Dictyostelium discoideum (Social amoeba).